The primary structure comprises 403 residues: Tyrosine--tRNA ligase (403 aa).

A 'HIGH' region motif is present at residues 43–52 (PTAPDLHLGH). The 'KMSKS' region motif lies at 227–231 (KMSKS). Residue Lys-230 coordinates ATP. Residues 338 to 399 (LPIAQLLKQT…GKRKFARVTI (62 aa)) enclose the S4 RNA-binding domain.

Belongs to the class-I aminoacyl-tRNA synthetase family. TyrS type 2 subfamily. In terms of assembly, homodimer.

It is found in the cytoplasm. It catalyses the reaction tRNA(Tyr) + L-tyrosine + ATP = L-tyrosyl-tRNA(Tyr) + AMP + diphosphate + H(+). In terms of biological role, catalyzes the attachment of tyrosine to tRNA(Tyr) in a two-step reaction: tyrosine is first activated by ATP to form Tyr-AMP and then transferred to the acceptor end of tRNA(Tyr). This chain is Tyrosine--tRNA ligase, found in Nitrosospira multiformis (strain ATCC 25196 / NCIMB 11849 / C 71).